The chain runs to 221 residues: Thiamine-phosphate synthase (221 aa).

4-amino-2-methyl-5-(diphosphooxymethyl)pyrimidine-binding positions include glutamine 44 to lysine 48 and asparagine 79. 2 residues coordinate Mg(2+): aspartate 80 and aspartate 99. Serine 117 provides a ligand contact to 4-amino-2-methyl-5-(diphosphooxymethyl)pyrimidine. Threonine 143–serine 145 lines the 2-[(2R,5Z)-2-carboxy-4-methylthiazol-5(2H)-ylidene]ethyl phosphate pocket. Position 146 (lysine 146) interacts with 4-amino-2-methyl-5-(diphosphooxymethyl)pyrimidine. 2-[(2R,5Z)-2-carboxy-4-methylthiazol-5(2H)-ylidene]ethyl phosphate-binding positions include glycine 175 and isoleucine 195–serine 196.

This sequence belongs to the thiamine-phosphate synthase family. Mg(2+) is required as a cofactor.

It carries out the reaction 2-[(2R,5Z)-2-carboxy-4-methylthiazol-5(2H)-ylidene]ethyl phosphate + 4-amino-2-methyl-5-(diphosphooxymethyl)pyrimidine + 2 H(+) = thiamine phosphate + CO2 + diphosphate. The catalysed reaction is 2-(2-carboxy-4-methylthiazol-5-yl)ethyl phosphate + 4-amino-2-methyl-5-(diphosphooxymethyl)pyrimidine + 2 H(+) = thiamine phosphate + CO2 + diphosphate. The enzyme catalyses 4-methyl-5-(2-phosphooxyethyl)-thiazole + 4-amino-2-methyl-5-(diphosphooxymethyl)pyrimidine + H(+) = thiamine phosphate + diphosphate. It functions in the pathway cofactor biosynthesis; thiamine diphosphate biosynthesis; thiamine phosphate from 4-amino-2-methyl-5-diphosphomethylpyrimidine and 4-methyl-5-(2-phosphoethyl)-thiazole: step 1/1. Functionally, condenses 4-methyl-5-(beta-hydroxyethyl)thiazole monophosphate (THZ-P) and 2-methyl-4-amino-5-hydroxymethyl pyrimidine pyrophosphate (HMP-PP) to form thiamine monophosphate (TMP). The chain is Thiamine-phosphate synthase from Geobacillus thermodenitrificans (strain NG80-2).